Consider the following 597-residue polypeptide: Nuclear receptor subfamily 4 group A member 1 (597 aa).

The interval 1 to 22 is disordered; it reads MPCIQAQYGTPATSPGPRDHLT. A required for nuclear import region spans residues 170–465; that stretch reads RVWTEQLPKA…PGEGKLIFCS (296 aa). The nuclear receptor DNA-binding region spans 263–338; the sequence is EGRCAVCGDN…VGMVKEVVRT (76 aa). 2 consecutive NR C4-type zinc fingers follow at residues 266–286 and 302–326; these read CAVC…CEGC and CLAN…FQKC. The tract at residues 267–353 is required for binding NBRE-containing DNA; that stretch reads AVCGDNASCQ…RRGRLPSKPK (87 aa). The tract at residues 298–360 is required for the interaction with RXRA; sequence AKYICLANKD…KPKQPPDASP (63 aa). Serine 340 is modified (phosphoserine; by PKA). The disordered stretch occupies residues 341 to 360; that stretch reads LKGRRGRLPSKPKQPPDASP. Position 350 is a phosphoserine; by PKA, RPS6KA1 and RPS6KA3 (serine 350). An NR LBD domain is found at 359–594; the sequence is SPTNLLTSLI…PIVDKIFMDT (236 aa). Residues 520 to 543 are binds lipopolysaccharide; the sequence is PRRVEELQNRIASCLKEHMAAVAG. Residues 583 to 594 are AF-2; the sequence is PPPIVDKIFMDT.

The protein belongs to the nuclear hormone receptor family. NR4 subfamily. As to quaternary structure, binds the NGFI-B response element (NBRE) as a monomer. Binds the Nur response element (NurRE), consisting of two inverse NBRE-related octanucleotide repeats separated by 6 base-pairs, as a dimer. Interacts (via N-terminus) with NLRP3 (via LRR repeat domain); the interaction is direct, requires binding of NR4A1/Nur77 to NBRE-containing dsDNA and lipopolysaccharide, and leads to non-canonical NLRP3 inflammasome activation. Interacts with GADD45GIP1. Interacts with STK11. Interacts with IFI27. Heterodimer (via DNA-binding domain) with RXRA (via C-terminus); DNA-binding of the heterodimer is enhanced by 9-cis retinoic acid. Competes for the RXRA interaction with EP300 and thereby attenuates EP300 mediated acetylation of RXRA. Interacts with NCOA1. Interacts with NCOA2. Interacts with NCOA3. The cofactor is Zn(2+). Phosphorylated at Ser-350 by RPS6KA1 and RPS6KA3 in response to mitogenic or stress stimuli. Phosphorylation of Ser-350 results in decrease in NBRE binding while phosphorylation of Ser-340 has little effect on it. In terms of processing, acetylated by p300/CBP, acetylation increases stability. Deacetylated by HDAC1. Expressed in lung, brain and superior cervical ganglia. High levels are seen in the adrenal tissue.

Its subcellular location is the nucleus. It localises to the cytoplasm. The protein resides in the cytosol. The protein localises to the mitochondrion. Functionally, orphan nuclear receptor. Binds the NGFI-B response element (NBRE) 5'-AAAGGTCA-3'. Binds 9-cis-retinoic acid outside of its ligand-binding (NR LBD) domain. Participates in energy homeostasis by sequestrating the kinase STK11 in the nucleus, thereby attenuating cytoplasmic AMPK activation. Regulates the inflammatory response in macrophages by regulating metabolic adaptations during inflammation, including repressing the transcription of genes involved in the citric acid cycle (TCA). Inhibits NF-kappa-B signaling by binding to low-affinity NF-kappa-B binding sites, such as at the IL2 promoter. May act concomitantly with NR4A2 in regulating the expression of delayed-early genes during liver regeneration. Plays a role in the vascular response to injury. In terms of biological role, in the cytosol, upon its detection of both bacterial lipopolysaccharide (LPS) and NBRE-containing mitochondrial DNA released by GSDMD pores during pyroptosis, it promotes non-canonical NLRP3 inflammasome activation by stimulating association of NLRP3 and NEK7. The chain is Nuclear receptor subfamily 4 group A member 1 (Nr4a1) from Rattus norvegicus (Rat).